A 606-amino-acid polypeptide reads, in one-letter code: DNA mismatch repair protein MutL (606 aa).

A disordered region spans residues 348–378; that stretch reads QPHAQRPQAPWSAETSPFRPYPPAAGFSERP.

Belongs to the DNA mismatch repair MutL/HexB family.

In terms of biological role, this protein is involved in the repair of mismatches in DNA. It is required for dam-dependent methyl-directed DNA mismatch repair. May act as a 'molecular matchmaker', a protein that promotes the formation of a stable complex between two or more DNA-binding proteins in an ATP-dependent manner without itself being part of a final effector complex. This chain is DNA mismatch repair protein MutL, found in Rhizobium etli (strain CIAT 652).